We begin with the raw amino-acid sequence, 476 residues long: Protein transport protein SEC61 subunit alpha (476 aa).

The Cytoplasmic segment spans residues 1–33 (MSSLRFLDLVKPFVPFLPEVQQPETKIPFNQKL). Residues 34-54 (MWTGLTLLIFLVMSQMPLYGI) form a helical membrane-spanning segment. Over 55 to 76 (VSSDTSDPLYWLRMMMASNRGT) the chain is Lumenal. A helical transmembrane segment spans residues 77-97 (LMELGITPIISSGMVFQLLAG). The Cytoplasmic portion of the chain corresponds to 98–119 (THMIDVNLDLKADRELYQTAQK). The helical transmembrane segment at 120–140 (LFAVILSIGTATVYVFTGLYG) threads the bilayer. Over 141-146 (PPSDLG) the chain is Lumenal. A helical transmembrane segment spans residues 147-167 (AGIVFLLILQLVVAGMIVILL). Topologically, residues 168 to 246 (DELLQKGYGL…YRQNLPNIMN (79 aa)) are cytoplasmic. A helical membrane pass occupies residues 247 to 267 (LLATLVVFAAVIYLQGFRVEI). The Lumenal portion of the chain corresponds to 268 to 361 (PVKSSRQRGA…KDALLDPIHT (94 aa)). The helical transmembrane segment at 362-382 (AVYIAYMLTACAVFSKTWIEV) threads the bilayer. At 383-415 (SGSSPRDVAKQLKDQGLVMAGHREQSMYKELKR) the chain is on the cytoplasmic side. Residues 416 to 434 (IIPTAAAFGGACIGALSVA) form a helical membrane-spanning segment. Topologically, residues 435 to 440 (SDLMGA) are lumenal. The chain crosses the membrane as a helical span at residues 441–458 (LGSGTGTLLAVTIIYGYF). Topologically, residues 459-476 (EIAAKEGDLQGMKGMIMG) are cytoplasmic.

It belongs to the SecY/SEC61-alpha family. In terms of assembly, heterotrimeric complex composed of SEC61-alpha, SEC61-beta and SEC61-gamma.

It localises to the endoplasmic reticulum membrane. Functionally, appears to play a crucial role in the insertion of secretory and membrane polypeptides into the ER. It is required for assembly of membrane and secretory proteins and is essential for cell growth. It interacts with other membrane proteins required for protein translocation. Upon binding to SEC62/63 complex, secretory precursor polypeptides may engage SEC61 to begin membrane penetration event. A cycle of assembly and disassembly of SEC62/63 from SEC61 may govern the activity of the translocase. This Neurospora crassa (strain ATCC 24698 / 74-OR23-1A / CBS 708.71 / DSM 1257 / FGSC 987) protein is Protein transport protein SEC61 subunit alpha (sec-61).